A 339-amino-acid chain; its full sequence is MTAAAPSQQRPAAARARNLPWVEKYRPQTLADLISHQDILSTIQKFISEDRLPHLLLYGPPGTGKTSTILACAKQLYKDKEFGSMVLELNASDDRGIDIVRGPILSFASTRTIFKKGFKLVILDEADAMTQDAQNALRRVIEKFTENTRFCLICNYLSKIIPALQSRCTRFRFGPLTPELMVPRLEHVVQEENVDISEDGMKALVTLSSGDMRRALNILQSTNMAFGKVTEETVYTCTGHPLKTDIANILDWMLNQDFTTAYKNIMELKTLKGLALHDILTEVHLFVHRVDFPSSVRIHLLTKMADIEYRLSVGTSEKIQLSSLIAAFQVTRDLIVAEA.

59-66 (GPPGTGKT) contributes to the ATP binding site.

It belongs to the activator 1 small subunits family. Subunit of the RFC complex, an heteropentameric complex consisting of a large subunit RFC1 and four small subunits RFC2, RFC3, RFC4 and RFC5; the RFC complex interacts with PCNA. Forms an heterotetrameric complex with RFC2, RFC3 and RFC4; this complex has ATPase activity but is not stimulated by PCNA. The heterotetramer of subunits RFC2, RFC3, RFC4 and RFC5 interacts with RAD17.

It localises to the nucleus. Functionally, subunit of the replication factor C (RFC) complex which acts during elongation of primed DNA templates by DNA polymerases delta and epsilon, and is necessary for ATP-dependent loading of proliferating cell nuclear antigen (PCNA) onto primed DNA. This Mus musculus (Mouse) protein is Replication factor C subunit 5 (Rfc5).